Consider the following 139-residue polypeptide: Phosphoribosyl-AMP cyclohydrolase (139 aa).

Asp95 is a binding site for Mg(2+). Zn(2+) is bound at residue Cys96. Mg(2+) is bound by residues Asp97 and Asp99. 2 residues coordinate Zn(2+): Cys114 and Cys121.

Belongs to the PRA-CH family. As to quaternary structure, homodimer. Mg(2+) serves as cofactor. Zn(2+) is required as a cofactor.

The protein localises to the cytoplasm. The enzyme catalyses 1-(5-phospho-beta-D-ribosyl)-5'-AMP + H2O = 1-(5-phospho-beta-D-ribosyl)-5-[(5-phospho-beta-D-ribosylamino)methylideneamino]imidazole-4-carboxamide. Its pathway is amino-acid biosynthesis; L-histidine biosynthesis; L-histidine from 5-phospho-alpha-D-ribose 1-diphosphate: step 3/9. Functionally, catalyzes the hydrolysis of the adenine ring of phosphoribosyl-AMP. The protein is Phosphoribosyl-AMP cyclohydrolase of Chelativorans sp. (strain BNC1).